The chain runs to 314 residues: Vacuolar membrane protein FOSTERSO_4058 (314 aa).

Residues 32 to 59 (KPTSSVVSETSSKSLPSLTSSAFSTSSG) form a disordered region. A helical membrane pass occupies residues 93 to 113 (VYIAVGAVIGAIFISILIWWL). A phosphoserine mark is found at Ser-148, Ser-254, and Ser-274. The interval 240-309 (EERKLNLNRP…PSMFLDDVLN (70 aa)) is disordered. Over residues 254–269 (SPERKEKKINSMEGYH) the composition is skewed to basic and acidic residues.

Belongs to the PRM5 family.

Its subcellular location is the vacuole membrane. In Saccharomyces cerevisiae (strain FostersO) (Baker's yeast), this protein is Vacuolar membrane protein FOSTERSO_4058.